The chain runs to 326 residues: Arabinose 5-phosphate isomerase KdsD (326 aa).

The region spanning 38 to 181 (ACELLLAGKG…AIALLEARGF (144 aa)) is the SIS domain. Residues 72–73 (GT), histidine 79, histidine 85, 111–120 (TLLPLIKRLG), and 145–147 (SVG) contribute to the substrate site. Position 79 (histidine 79) interacts with Zn(2+). CBS domains lie at 207–265 (MHVG…GIDV) and 274–326 (MTVH…AGVM).

It belongs to the SIS family. GutQ/KpsF subfamily. Homotetramer.

It catalyses the reaction D-arabinose 5-phosphate = D-ribulose 5-phosphate. Its pathway is carbohydrate biosynthesis; 3-deoxy-D-manno-octulosonate biosynthesis; 3-deoxy-D-manno-octulosonate from D-ribulose 5-phosphate: step 1/3. It participates in bacterial outer membrane biogenesis; lipopolysaccharide biosynthesis. Its function is as follows. Involved in the biosynthesis of 3-deoxy-D-manno-octulosonate (KDO), a unique 8-carbon sugar component of lipopolysaccharides (LPSs). Catalyzes the reversible aldol-ketol isomerization between D-ribulose 5-phosphate (Ru5P) and D-arabinose 5-phosphate (A5P). This chain is Arabinose 5-phosphate isomerase KdsD (kdsD), found in Pseudomonas aeruginosa (strain ATCC 15692 / DSM 22644 / CIP 104116 / JCM 14847 / LMG 12228 / 1C / PRS 101 / PAO1).